The primary structure comprises 374 residues: tRNA-specific 2-thiouridylase MnmA (374 aa).

ATP-binding positions include 17-24 (GMSGGVDS) and Met-43. Residues 103-105 (NPD) are interaction with target base in tRNA. The Nucleophile role is filled by Cys-108. Cys-108 and Cys-204 are disulfide-bonded. Residue Gly-132 participates in ATP binding. The interaction with tRNA stretch occupies residues 154–156 (KDQ). Residue Cys-204 is the Cysteine persulfide intermediate of the active site. The segment at 316-317 (RY) is interaction with tRNA.

The protein belongs to the MnmA/TRMU family.

It is found in the cytoplasm. It carries out the reaction S-sulfanyl-L-cysteinyl-[protein] + uridine(34) in tRNA + AH2 + ATP = 2-thiouridine(34) in tRNA + L-cysteinyl-[protein] + A + AMP + diphosphate + H(+). Catalyzes the 2-thiolation of uridine at the wobble position (U34) of tRNA, leading to the formation of s(2)U34. The chain is tRNA-specific 2-thiouridylase MnmA from Pseudomonas fluorescens (strain SBW25).